The chain runs to 556 residues: Formate--tetrahydrofolate ligase (556 aa).

65 to 72 (TPAGEGKS) is an ATP binding site.

The protein belongs to the formate--tetrahydrofolate ligase family.

It catalyses the reaction (6S)-5,6,7,8-tetrahydrofolate + formate + ATP = (6R)-10-formyltetrahydrofolate + ADP + phosphate. The protein operates within one-carbon metabolism; tetrahydrofolate interconversion. In Clostridium botulinum (strain Alaska E43 / Type E3), this protein is Formate--tetrahydrofolate ligase.